We begin with the raw amino-acid sequence, 78 residues long: Large ribosomal subunit protein bL28 (78 aa).

The disordered stretch occupies residues 1-26 (MSAYCQVTGRKPSFGKSVSHSHRRTN).

This sequence belongs to the bacterial ribosomal protein bL28 family.

This chain is Large ribosomal subunit protein bL28, found in Corynebacterium jeikeium (strain K411).